Here is a 341-residue protein sequence, read N- to C-terminus: NADH-ubiquinone oxidoreductase chain 2 (341 aa).

9 consecutive transmembrane segments (helical) span residues 8 to 28 (ILFITIMIIGTLITVTSNSWL), 60 to 80 (YFLTQVLASTVLLFSSILLML), 95 to 115 (MIIMSALLLKSGAAPFHFWFP), 121 to 141 (LTWMNALMLMTWQKIAPLMLI), 146 to 166 (IKYLLLISVILSVIIGAIGGL), 195 to 215 (SIWLIYFFFYSFLSFVLTFMF), 238 to 258 (FTLFMNFLSLGGLPPFLGFLP), 273 to 293 (FMLTLMMMSTLITLFFYLRIC), and 321 to 341 (MIMTFFSIFGLFLISLFYFMF).

It belongs to the complex I subunit 2 family.

The protein resides in the mitochondrion inner membrane. The enzyme catalyses a ubiquinone + NADH + 5 H(+)(in) = a ubiquinol + NAD(+) + 4 H(+)(out). In terms of biological role, core subunit of the mitochondrial membrane respiratory chain NADH dehydrogenase (Complex I) that is believed to belong to the minimal assembly required for catalysis. Complex I functions in the transfer of electrons from NADH to the respiratory chain. The immediate electron acceptor for the enzyme is believed to be ubiquinone. In Drosophila melanogaster (Fruit fly), this protein is NADH-ubiquinone oxidoreductase chain 2 (mt:ND2).